The chain runs to 500 residues: Pentatricopeptide repeat-containing protein At1g05750, chloroplastic (500 aa).

The N-terminal 54 residues, 1-54 (MGLLPVVGITSPALITHKNHANPKIQRHNQSTSETTVSWTSRINLLTRNGRLAE), are a transit peptide targeting the chloroplast. PPR repeat units lie at residues 35–69 (TTVS…GVEP), 70–106 (NHIT…GLDR), 108–138 (HVMV…MEDK), 139–173 (NSVT…DLIS), 174–204 (WTAM…GVKP), 205–239 (DYVA…DFKN), 240–270 (NVRV…MEKR), 271–305 (TVVS…GFKP), 306–336 (DAVT…MKCD), and 342–376 (RIEH…PNEV). The interval 377–453 (VIGSLLAACS…QPGFSSIEID (77 aa)) is type E motif. A type E(+) motif region spans residues 454–484 (DCMHVFMAGDNAHVETTYIREVLELISSDLR).

It belongs to the PPR family. PCMP-E subfamily.

The protein resides in the plastid. It localises to the chloroplast. This Arabidopsis thaliana (Mouse-ear cress) protein is Pentatricopeptide repeat-containing protein At1g05750, chloroplastic (PDE247).